Consider the following 334-residue polypeptide: Ornithine carbamoyltransferase, catabolic (334 aa).

Carbamoyl phosphate contacts are provided by residues 57–60 (STRT), Q84, R108, and 135–138 (HPTQ). L-ornithine-binding positions include N168, D232, and 236-237 (SM). Carbamoyl phosphate contacts are provided by residues 274-275 (CL) and R321.

It belongs to the aspartate/ornithine carbamoyltransferase superfamily. OTCase family.

Its subcellular location is the cytoplasm. The catalysed reaction is carbamoyl phosphate + L-ornithine = L-citrulline + phosphate + H(+). The protein operates within amino-acid degradation; L-arginine degradation via ADI pathway; carbamoyl phosphate from L-arginine: step 2/2. Functionally, reversibly catalyzes the transfer of the carbamoyl group from carbamoyl phosphate (CP) to the N(epsilon) atom of ornithine (ORN) to produce L-citrulline. This Haemophilus influenzae (strain ATCC 51907 / DSM 11121 / KW20 / Rd) protein is Ornithine carbamoyltransferase, catabolic (arcB).